The sequence spans 261 residues: Putative [LysW]-aminoadipate/[LysW]-glutamate kinase (261 aa).

Substrate-binding positions include 35–36 (GG), Arg-62, and Asn-162.

It belongs to the acetylglutamate kinase family. LysZ subfamily.

The protein resides in the cytoplasm. It carries out the reaction [amino-group carrier protein]-C-terminal-N-(1,4-dicarboxybutan-1-yl)-L-glutamine + ATP = [amino-group carrier protein]-C-terminal-N-(1-carboxy-5-phosphooxy-5-oxopentan-1-yl)-L-glutamine + ADP. The catalysed reaction is [amino-group carrier protein]-C-terminal-gamma-(L-glutamyl)-L-glutamate + ATP = [amino-group carrier protein]-C-terminal-gamma-(5-phospho-L-glutamyl)-L-glutamate + ADP. It participates in amino-acid biosynthesis; L-lysine biosynthesis via AAA pathway; L-lysine from L-alpha-aminoadipate (Thermus route): step 2/5. It functions in the pathway amino-acid biosynthesis; L-arginine biosynthesis. Involved in both the arginine and lysine biosynthetic pathways. Phosphorylates the LysW-bound precursors glutamate (for arginine biosynthesis), respectively alpha-aminoadipate (for lysine biosynthesis). This Pyrobaculum calidifontis (strain DSM 21063 / JCM 11548 / VA1) protein is Putative [LysW]-aminoadipate/[LysW]-glutamate kinase.